A 255-amino-acid polypeptide reads, in one-letter code: MPTDIFSFKRFDIDQTGCAMRVGTDGVLLGAWAGEDPAGSIPQHCLDIGTGTGLIALMLAQRFPQARVQGIEIDPIAAECARANAAASPFSDRIVIASGDILDSSLESLIGNQRFDLIVSNPPFFKSSLHAPDRQRTMARHEETLPLEKLICRASELLSPQGRLALITPRDRLKDLRLYAATYRLVSSRLTEVRTLPHKEPKRILSEWRPADTAIDRSPFTDTLIIHPATGYYSPEYVRLTEPFYTTSFRILAVG.

It belongs to the methyltransferase superfamily. tRNA (adenine-N(6)-)-methyltransferase family.

Its subcellular location is the cytoplasm. The catalysed reaction is adenosine(37) in tRNA1(Val) + S-adenosyl-L-methionine = N(6)-methyladenosine(37) in tRNA1(Val) + S-adenosyl-L-homocysteine + H(+). Specifically methylates the adenine in position 37 of tRNA(1)(Val) (anticodon cmo5UAC). This Porphyromonas gingivalis (strain ATCC 33277 / DSM 20709 / CIP 103683 / JCM 12257 / NCTC 11834 / 2561) protein is tRNA1(Val) (adenine(37)-N6)-methyltransferase.